Consider the following 223-residue polypeptide: Small ribosomal subunit protein uS3 (223 aa).

A KH type-2 domain is found at 40–108 (IRELVHRELP…KVHLNIQEIR (69 aa)).

This sequence belongs to the universal ribosomal protein uS3 family. Part of the 30S ribosomal subunit. Forms a tight complex with proteins S10 and S14.

Functionally, binds the lower part of the 30S subunit head. Binds mRNA in the 70S ribosome, positioning it for translation. The chain is Small ribosomal subunit protein uS3 from Thermomicrobium roseum (strain ATCC 27502 / DSM 5159 / P-2).